We begin with the raw amino-acid sequence, 285 residues long: ATP synthase gamma chain (285 aa).

Belongs to the ATPase gamma chain family. In terms of assembly, F-type ATPases have 2 components, CF(1) - the catalytic core - and CF(0) - the membrane proton channel. CF(1) has five subunits: alpha(3), beta(3), gamma(1), delta(1), epsilon(1). CF(0) has three main subunits: a, b and c.

Its subcellular location is the cell membrane. Its function is as follows. Produces ATP from ADP in the presence of a proton gradient across the membrane. The gamma chain is believed to be important in regulating ATPase activity and the flow of protons through the CF(0) complex. The polypeptide is ATP synthase gamma chain (Dehalococcoides mccartyi (strain ATCC BAA-2266 / KCTC 15142 / 195) (Dehalococcoides ethenogenes (strain 195))).